The primary structure comprises 613 residues: Dihydroxy-acid dehydratase (613 aa).

Residue D81 coordinates Mg(2+). C122 is a [2Fe-2S] cluster binding site. Mg(2+)-binding residues include D123 and K124. N6-carboxylysine is present on K124. C195 contributes to the [2Fe-2S] cluster binding site. E491 lines the Mg(2+) pocket. S517 functions as the Proton acceptor in the catalytic mechanism.

Belongs to the IlvD/Edd family. In terms of assembly, homodimer. [2Fe-2S] cluster serves as cofactor. Requires Mg(2+) as cofactor.

The catalysed reaction is (2R)-2,3-dihydroxy-3-methylbutanoate = 3-methyl-2-oxobutanoate + H2O. It carries out the reaction (2R,3R)-2,3-dihydroxy-3-methylpentanoate = (S)-3-methyl-2-oxopentanoate + H2O. It participates in amino-acid biosynthesis; L-isoleucine biosynthesis; L-isoleucine from 2-oxobutanoate: step 3/4. The protein operates within amino-acid biosynthesis; L-valine biosynthesis; L-valine from pyruvate: step 3/4. Functionally, functions in the biosynthesis of branched-chain amino acids. Catalyzes the dehydration of (2R,3R)-2,3-dihydroxy-3-methylpentanoate (2,3-dihydroxy-3-methylvalerate) into 2-oxo-3-methylpentanoate (2-oxo-3-methylvalerate) and of (2R)-2,3-dihydroxy-3-methylbutanoate (2,3-dihydroxyisovalerate) into 2-oxo-3-methylbutanoate (2-oxoisovalerate), the penultimate precursor to L-isoleucine and L-valine, respectively. This chain is Dihydroxy-acid dehydratase, found in Buchnera aphidicola subsp. Schlechtendalia chinensis.